Reading from the N-terminus, the 325-residue chain is H-2 class I histocompatibility antigen, Q10 alpha chain (325 aa).

Residues Met-1–Ala-24 form the signal peptide. Positions Gly-25–Ser-114 are alpha-1. Over Gly-25–His-310 the chain is Extracellular. A glycan (N-linked (GlcNAc...) asparagine) is linked at Asn-110. Positions Gly-115–Thr-206 are alpha-2. Intrachain disulfides connect Cys-125–Cys-188 and Cys-227–Cys-283. Residues Asp-207 to Trp-298 form an alpha-3 region. One can recognise an Ig-like C1-type domain in the interval Pro-209–Arg-297. N-linked (GlcNAc...) asparagine glycosylation occurs at Asn-280. The segment at Glu-299 to His-310 is connecting peptide. A helical membrane pass occupies residues Ile-311–Tyr-324.

The protein belongs to the MHC class I family. As to quaternary structure, heterodimer of an alpha chain and a beta chain (beta-2-microglobulin).

The protein localises to the membrane. Functionally, involved in the presentation of foreign antigens to the immune system. This chain is H-2 class I histocompatibility antigen, Q10 alpha chain (H2-Q10), found in Mus musculus (Mouse).